Here is a 353-residue protein sequence, read N- to C-terminus: uncharacterized protein (353 aa).

The HTH luxR-type domain maps to 18–83 (NIEFPCLLSE…TLWRDVFLRF (66 aa)). The segment at residues 42–61 (VNEISKRRNRSIKTVSCQKM) is a DNA-binding region (H-T-H motif). The region spanning 98–350 (NSSVLPVVSS…AFVRKLLASL (253 aa)) is the EAL domain.

This is an uncharacterized protein from Escherichia coli (strain K12).